An 855-amino-acid chain; its full sequence is DNA mismatch repair protein MutS (855 aa).

Residue 618–625 (GPNMGGKS) participates in ATP binding.

It belongs to the DNA mismatch repair MutS family.

In terms of biological role, this protein is involved in the repair of mismatches in DNA. It is possible that it carries out the mismatch recognition step. This protein has a weak ATPase activity. This is DNA mismatch repair protein MutS from Shewanella loihica (strain ATCC BAA-1088 / PV-4).